Here is a 206-residue protein sequence, read N- to C-terminus: Putative NAD(P)H nitroreductase MhqN (206 aa).

FMN is bound by residues 11 to 13, 68 to 70, 157 to 158, Arg-193, and Arg-196; these read RRS, QYK, and IG.

It belongs to the nitroreductase family. In terms of assembly, homodimer. Requires FMN as cofactor.

The protein resides in the cytoplasm. In terms of biological role, putative nitroreductase that may contribute to the degradation of aromatic compounds. The protein is Putative NAD(P)H nitroreductase MhqN (mhqN) of Bacillus subtilis (strain 168).